A 336-amino-acid chain; its full sequence is Eukaryotic translation initiation factor 3 subunit H (336 aa).

One can recognise an MPN domain in the interval 21 to 154; sequence VQCDGLAAMK…LKAYRLTPQA (134 aa).

It belongs to the eIF-3 subunit H family. Component of the eukaryotic translation initiation factor 3 (eIF-3) complex.

It is found in the cytoplasm. Its function is as follows. Component of the eukaryotic translation initiation factor 3 (eIF-3) complex, which is involved in protein synthesis of a specialized repertoire of mRNAs and, together with other initiation factors, stimulates binding of mRNA and methionyl-tRNAi to the 40S ribosome. The eIF-3 complex specifically targets and initiates translation of a subset of mRNAs involved in cell proliferation. The polypeptide is Eukaryotic translation initiation factor 3 subunit H (Culex quinquefasciatus (Southern house mosquito)).